The following is a 460-amino-acid chain: GTPase Der (460 aa).

EngA-type G domains follow at residues 3–167 (FTIA…PEPT) and 189–364 (IRVA…AIWN). GTP is bound by residues 9–16 (GRPNVGKS), 56–60 (DTAGL), 119–122 (NKSE), 195–202 (GRPNAGKS), 242–246 (DTAGL), and 307–310 (NKWD). The KH-like domain occupies 365 to 449 (RRVPTAALNR…PIRITLREKA (85 aa)).

This sequence belongs to the TRAFAC class TrmE-Era-EngA-EngB-Septin-like GTPase superfamily. EngA (Der) GTPase family. As to quaternary structure, associates with the 50S ribosomal subunit.

Its function is as follows. GTPase that plays an essential role in the late steps of ribosome biogenesis. The polypeptide is GTPase Der (Nitrobacter hamburgensis (strain DSM 10229 / NCIMB 13809 / X14)).